The chain runs to 138 residues: Spermatid nuclear transition protein 4 (138 aa).

A compositionally biased stretch (basic and acidic residues) spans 1–11; sequence AKVSRKPREPR. Residues 1 to 138 form a disordered region; that stretch reads AKVSRKPREP…QGVTRRGRRY (138 aa). Phosphoserine; by PKC is present on Ser4. Positions 5–23 match the Nuclear localization signal motif; sequence RKPREPRTAVTQSTRRIKR. Composition is skewed to basic residues over residues 19-34, 43-57, and 65-74; these read RRIK…RSRG, MKIK…RRKI, and KKAKKARKHF. Residue Thr26 is modified to Phosphothreonine; by PKA. The Nuclear localization signal motif lies at 54 to 72; the sequence is RRKIQTSAGQPKKAKKARK. Positions 86 to 101 are enriched in low complexity; the sequence is NKKTNQNKRQNQNKRQ. Polar residues predominate over residues 120–131; the sequence is PTTSCKWCSQGV.

The protein resides in the nucleus. The protein localises to the chromosome. Involved in nuclear basic protein transition: histones are replaced by spermatid specific proteins which are themselves replaced by protamines in late spermatids. This chain is Spermatid nuclear transition protein 4 (TNP4), found in Sus scrofa (Pig).